A 290-amino-acid chain; its full sequence is Translin-associated protein X (290 aa).

A disordered region spans residues 1-32 (MSNKEGSGGFRKRKHDNFPHNQRREGKDVNSS). The span at 16–28 (DNFPHNQRREGKD) shows a compositional bias: basic and acidic residues. The interaction with C1D stretch occupies residues 73 to 208 (LLHRITSAPD…MRMCINSVGN (136 aa)). 2 residues coordinate Mg(2+): Glu-129 and Glu-197. Lys-279 participates in a covalent cross-link: Glycyl lysine isopeptide (Lys-Gly) (interchain with G-Cter in SUMO2).

Belongs to the translin family. Ring-shaped heterooctamer of six TSN and two TSNAX subunits. Interacts with GOLGA3, TSNAXIP1, SUN1 and AKAP9. Interacts with the homodimeric form of C1D following gamma-radiation. Interacts with TSN and C1D in a mutually exclusive manner. Sumoylated with SUMO1.

The protein localises to the cytoplasm. It localises to the perinuclear region. Its subcellular location is the golgi apparatus. It is found in the nucleus. Its function is as follows. Acts in combination with TSN as an endonuclease involved in the activation of the RNA-induced silencing complex (RISC). Possible role in spermatogenesis. The sequence is that of Translin-associated protein X (TSNAX) from Pongo abelii (Sumatran orangutan).